The primary structure comprises 200 residues: Ribonuclease HII (200 aa).

Positions 10-200 (LIEAGCDEAG…LGDGQLNLNF (191 aa)) constitute an RNase H type-2 domain. Positions 16, 17, and 108 each coordinate a divalent metal cation.

The protein belongs to the RNase HII family. Mn(2+) is required as a cofactor. Requires Mg(2+) as cofactor.

It localises to the cytoplasm. The enzyme catalyses Endonucleolytic cleavage to 5'-phosphomonoester.. Functionally, endonuclease that specifically degrades the RNA of RNA-DNA hybrids. This chain is Ribonuclease HII, found in Bacteroides thetaiotaomicron (strain ATCC 29148 / DSM 2079 / JCM 5827 / CCUG 10774 / NCTC 10582 / VPI-5482 / E50).